The sequence spans 208 residues: Small ribosomal subunit protein uS4 (208 aa).

The S4 RNA-binding domain maps to 98–163; it reads SRLDNVVYRA…LTPFVIARAV (66 aa).

Belongs to the universal ribosomal protein uS4 family. As to quaternary structure, part of the 30S ribosomal subunit. Contacts protein S5. The interaction surface between S4 and S5 is involved in control of translational fidelity.

One of the primary rRNA binding proteins, it binds directly to 16S rRNA where it nucleates assembly of the body of the 30S subunit. Its function is as follows. With S5 and S12 plays an important role in translational accuracy. This Acidothermus cellulolyticus (strain ATCC 43068 / DSM 8971 / 11B) protein is Small ribosomal subunit protein uS4.